A 295-amino-acid polypeptide reads, in one-letter code: Proline iminopeptidase (295 aa).

The AB hydrolase-1 domain occupies 35–279 (TLHGGPGMSH…ACSHLTMWED (245 aa)). Ser-107 serves as the catalytic Nucleophile. The active site involves Asp-246. His-273 serves as the catalytic Proton donor.

Belongs to the peptidase S33 family. In terms of assembly, part of the tricorn proteolytic complex.

It carries out the reaction Release of N-terminal proline from a peptide.. Its function is as follows. Cleaves H-Pro-AMC as well as a wide spectrum of amino acid substrates and several peptide substrates without a proline at the N-terminus. In conjunction with the three factors F1, F2 and F3, Tricorn degrades oligopeptides in a sequential manner, yielding free amino acids. This Thermoplasma volcanium (strain ATCC 51530 / DSM 4299 / JCM 9571 / NBRC 15438 / GSS1) protein is Proline iminopeptidase (pip).